The sequence spans 215 residues: MKIKYMGHSAFIIEHKNRLIIDPYIETIPEVDYVLVTHAHNDHFGNTIEIAKKNNAKVISIYEIAEFVKQFNIESIGMNFGGTIDIGEKVSLVPAVHSSTLYYNGKAYPLGNPGGFVIKGNKTIYHAGDTMVFKDMELIGELFKIDVALLPIGGVFTMDIDQALKAIDLLKPKIVIPMHYNTWPIIKADPYEFKRKAEEKGVEAIVLNKDEEIDL.

Belongs to the UPF0173 family.

This Nanoarchaeum equitans (strain Kin4-M) protein is UPF0173 metal-dependent hydrolase NEQ378.